A 400-amino-acid chain; its full sequence is Chalcone synthase WHP1 (400 aa).

Residue C167 is part of the active site.

The protein belongs to the thiolase-like superfamily. Chalcone/stilbene synthases family.

The catalysed reaction is (E)-4-coumaroyl-CoA + 3 malonyl-CoA + 3 H(+) = 2',4,4',6'-tetrahydroxychalcone + 3 CO2 + 4 CoA. Its pathway is secondary metabolite biosynthesis; flavonoid biosynthesis. Its function is as follows. The primary product of this enzyme is 4,2',4',6'-tetrahydroxychalcone (also termed naringenin-chalcone or chalcone) which can under specific conditions spontaneously isomerize into naringenin. This Zea mays (Maize) protein is Chalcone synthase WHP1 (WHP1).